The chain runs to 70 residues: Gas vesicle protein A (70 aa).

Belongs to the gas vesicle GvpA family. As to quaternary structure, the gas vesicle shell is 2 nm thick and consists of a single layer of this protein. It forms helical ribs nearly perpendicular to the long axis of the vesicle.

It is found in the gas vesicle shell. Its function is as follows. Gas vesicles are hollow, gas filled proteinaceous nanostructures found in some microorganisms. During planktonic growth they allow positioning of the organism at a favorable depth for light or nutrient acquisition. GvpA forms the protein shell. The sequence is that of Gas vesicle protein A from Ancylobacter aquaticus.